The sequence spans 325 residues: Pyruvate dehydrogenase E1 component subunit beta (325 aa).

Glutamate 59 contacts thiamine diphosphate.

As to quaternary structure, heterodimer of an alpha and a beta chain. Requires thiamine diphosphate as cofactor.

It carries out the reaction N(6)-[(R)-lipoyl]-L-lysyl-[protein] + pyruvate + H(+) = N(6)-[(R)-S(8)-acetyldihydrolipoyl]-L-lysyl-[protein] + CO2. Functionally, the pyruvate dehydrogenase complex catalyzes the overall conversion of pyruvate to acetyl-CoA and CO(2). It contains multiple copies of three enzymatic components: pyruvate dehydrogenase (E1), dihydrolipoamide acetyltransferase (E2) and lipoamide dehydrogenase (E3). This is Pyruvate dehydrogenase E1 component subunit beta (pdhB) from Rickettsia bellii (strain RML369-C).